A 578-amino-acid chain; its full sequence is Sulfite reductase [NADPH] hemoprotein beta-component (578 aa).

Residues cysteine 441, cysteine 447, cysteine 487, and cysteine 491 each coordinate [4Fe-4S] cluster. Cysteine 491 lines the siroheme pocket.

It belongs to the nitrite and sulfite reductase 4Fe-4S domain family. Alpha(8)-beta(8). The alpha component is a flavoprotein, the beta component is a hemoprotein. Requires siroheme as cofactor. [4Fe-4S] cluster serves as cofactor.

The enzyme catalyses hydrogen sulfide + 3 NADP(+) + 3 H2O = sulfite + 3 NADPH + 4 H(+). Its pathway is sulfur metabolism; hydrogen sulfide biosynthesis; hydrogen sulfide from sulfite (NADPH route): step 1/1. In terms of biological role, component of the sulfite reductase complex that catalyzes the 6-electron reduction of sulfite to sulfide. This is one of several activities required for the biosynthesis of L-cysteine from sulfate. In Vibrio parahaemolyticus serotype O3:K6 (strain RIMD 2210633), this protein is Sulfite reductase [NADPH] hemoprotein beta-component.